We begin with the raw amino-acid sequence, 322 residues long: RING finger protein 113B (322 aa).

Positions 24–92 are disordered; sequence KPGRKGAAGL…EEAAPESLDV (69 aa). Residues 46–60 show a composition bias toward low complexity; the sequence is SSSSGDEGDTVAQPP. The segment at 190–218 adopts a C3H1-type zinc-finger fold; sequence DYQPDICKDYKETGFCGFGDSCKFLHDRS. Residues 256-294 form an RING-type zinc finger; that stretch reads CFICRQAFQNPVVTKCRHYFCESCALEHFRATPRCYICD.

This Homo sapiens (Human) protein is RING finger protein 113B (RNF113B).